The chain runs to 115 residues: Large ribosomal subunit protein bL19 (115 aa).

It belongs to the bacterial ribosomal protein bL19 family.

In terms of biological role, this protein is located at the 30S-50S ribosomal subunit interface and may play a role in the structure and function of the aminoacyl-tRNA binding site. In Erwinia tasmaniensis (strain DSM 17950 / CFBP 7177 / CIP 109463 / NCPPB 4357 / Et1/99), this protein is Large ribosomal subunit protein bL19.